The primary structure comprises 211 residues: ATP-dependent Clp protease proteolytic subunit 1 (211 aa).

S107 (nucleophile) is an active-site residue. H132 is a catalytic residue.

This sequence belongs to the peptidase S14 family. As to quaternary structure, fourteen ClpP subunits assemble into 2 heptameric rings which stack back to back to give a disk-like structure with a central cavity, resembling the structure of eukaryotic proteasomes.

The protein localises to the cytoplasm. It catalyses the reaction Hydrolysis of proteins to small peptides in the presence of ATP and magnesium. alpha-casein is the usual test substrate. In the absence of ATP, only oligopeptides shorter than five residues are hydrolyzed (such as succinyl-Leu-Tyr-|-NHMec, and Leu-Tyr-Leu-|-Tyr-Trp, in which cleavage of the -Tyr-|-Leu- and -Tyr-|-Trp bonds also occurs).. Functionally, cleaves peptides in various proteins in a process that requires ATP hydrolysis. Has a chymotrypsin-like activity. Plays a major role in the degradation of misfolded proteins. This chain is ATP-dependent Clp protease proteolytic subunit 1, found in Mycolicibacterium paratuberculosis (strain ATCC BAA-968 / K-10) (Mycobacterium paratuberculosis).